The sequence spans 416 residues: Gamma-glutamyl phosphate reductase (416 aa).

This sequence belongs to the gamma-glutamyl phosphate reductase family.

The protein resides in the cytoplasm. It catalyses the reaction L-glutamate 5-semialdehyde + phosphate + NADP(+) = L-glutamyl 5-phosphate + NADPH + H(+). It participates in amino-acid biosynthesis; L-proline biosynthesis; L-glutamate 5-semialdehyde from L-glutamate: step 2/2. Catalyzes the NADPH-dependent reduction of L-glutamate 5-phosphate into L-glutamate 5-semialdehyde and phosphate. The product spontaneously undergoes cyclization to form 1-pyrroline-5-carboxylate. The polypeptide is Gamma-glutamyl phosphate reductase (Salmonella newport (strain SL254)).